The following is a 1013-amino-acid chain: Probable beta-galactosidase B (1013 aa).

An N-terminal signal peptide occupies residues 1 to 21; it reads MTRILNCLLVLLACLGVSSKA. Y90 contributes to the substrate binding site. An N-linked (GlcNAc...) asparagine glycan is attached at N100. The substrate site is built by N135, A136, E137, and N195. E196 serves as the catalytic Proton donor. N211 carries N-linked (GlcNAc...) asparagine glycosylation. Y265 is a binding site for substrate. A disulfide bond links C271 and C324. E308 (nucleophile) is an active-site residue. Y373 serves as a coordination point for substrate. 7 N-linked (GlcNAc...) asparagine glycosylation sites follow: N411, N442, N456, N626, N735, N768, and N775.

This sequence belongs to the glycosyl hydrolase 35 family.

It is found in the secreted. It catalyses the reaction Hydrolysis of terminal non-reducing beta-D-galactose residues in beta-D-galactosides.. In terms of biological role, cleaves beta-linked terminal galactosyl residues from gangliosides, glycoproteins, and glycosaminoglycans. The polypeptide is Probable beta-galactosidase B (lacB) (Penicillium rubens (strain ATCC 28089 / DSM 1075 / NRRL 1951 / Wisconsin 54-1255) (Penicillium chrysogenum)).